Reading from the N-terminus, the 249-residue chain is Octanoyltransferase (249 aa).

The tract at residues 1–23 is disordered; it reads MVNSPQNPRQDQRQDLDLTSFSA. The BPL/LPL catalytic domain maps to 57–241; the sequence is GEAPELVWLL…AFEELFGPTR (185 aa). Residues 95 to 102, 170 to 172, and 183 to 185 each bind substrate; these read RGGQLTYH, AIG, and GIA. Residue C201 is the Acyl-thioester intermediate of the active site.

Belongs to the LipB family.

The protein localises to the cytoplasm. The enzyme catalyses octanoyl-[ACP] + L-lysyl-[protein] = N(6)-octanoyl-L-lysyl-[protein] + holo-[ACP] + H(+). It functions in the pathway protein modification; protein lipoylation via endogenous pathway; protein N(6)-(lipoyl)lysine from octanoyl-[acyl-carrier-protein]: step 1/2. Functionally, catalyzes the transfer of endogenously produced octanoic acid from octanoyl-acyl-carrier-protein onto the lipoyl domains of lipoate-dependent enzymes. Lipoyl-ACP can also act as a substrate although octanoyl-ACP is likely to be the physiological substrate. In Bradyrhizobium diazoefficiens (strain JCM 10833 / BCRC 13528 / IAM 13628 / NBRC 14792 / USDA 110), this protein is Octanoyltransferase.